The sequence spans 853 residues: DNA mismatch repair protein MutS (853 aa).

G613–S620 is a binding site for ATP.

The protein belongs to the DNA mismatch repair MutS family.

This protein is involved in the repair of mismatches in DNA. It is possible that it carries out the mismatch recognition step. This protein has a weak ATPase activity. The sequence is that of DNA mismatch repair protein MutS from Vibrio campbellii (strain ATCC BAA-1116).